A 473-amino-acid chain; its full sequence is Photosystem II CP43 reaction center protein (473 aa).

The propeptide occupies 1-14 (MKTLYSLRRFYPVE). Position 15 is an N-acetylthreonine (T15). A Phosphothreonine modification is found at T15. 5 consecutive transmembrane segments (helical) span residues 69 to 93 (LFEVAHFVPEKPMYEQGLILLPHLA), 134 to 155 (LLGPETLEESFPFFGYVWKDRN), 178 to 200 (KALYFGGVYDTWAPGGGDVRKIT), 255 to 275 (KPFAWARRALVWSGEAYLSYS), and 291 to 312 (WFNNTAYPSEFYGPTGPEASQA). E367 provides a ligand contact to [CaMn4O5] cluster. A helical membrane pass occupies residues 447–471 (RARAAAAGFEKGIDRDFEPVLSMTP).

This sequence belongs to the PsbB/PsbC family. PsbC subfamily. PSII is composed of 1 copy each of membrane proteins PsbA, PsbB, PsbC, PsbD, PsbE, PsbF, PsbH, PsbI, PsbJ, PsbK, PsbL, PsbM, PsbT, PsbX, PsbY, PsbZ, Psb30/Ycf12, at least 3 peripheral proteins of the oxygen-evolving complex and a large number of cofactors. It forms dimeric complexes. It depends on Binds multiple chlorophylls and provides some of the ligands for the Ca-4Mn-5O cluster of the oxygen-evolving complex. It may also provide a ligand for a Cl- that is required for oxygen evolution. PSII binds additional chlorophylls, carotenoids and specific lipids. as a cofactor.

Its subcellular location is the plastid. The protein resides in the chloroplast thylakoid membrane. In terms of biological role, one of the components of the core complex of photosystem II (PSII). It binds chlorophyll and helps catalyze the primary light-induced photochemical processes of PSII. PSII is a light-driven water:plastoquinone oxidoreductase, using light energy to abstract electrons from H(2)O, generating O(2) and a proton gradient subsequently used for ATP formation. This is Photosystem II CP43 reaction center protein from Daucus carota (Wild carrot).